Reading from the N-terminus, the 198-residue chain is Carnitine operon protein CaiE (198 aa).

The disordered stretch occupies residues 174-198 (KPLTQAEENRPRLKGTTDVKPKSAQ). Residues 180–198 (EENRPRLKGTTDVKPKSAQ) show a composition bias toward basic and acidic residues.

This sequence belongs to the transferase hexapeptide repeat family.

It functions in the pathway amine and polyamine metabolism; carnitine metabolism. Overproduction of CaiE stimulates the activity of CaiB and CaiD. The sequence is that of Carnitine operon protein CaiE from Salmonella dublin (strain CT_02021853).